The sequence spans 493 residues: Guanosine-5'-triphosphate,3'-diphosphate pyrophosphatase (493 aa).

It belongs to the GppA/Ppx family. GppA subfamily.

The catalysed reaction is guanosine 3'-diphosphate 5'-triphosphate + H2O = guanosine 3',5'-bis(diphosphate) + phosphate + H(+). Its pathway is purine metabolism; ppGpp biosynthesis; ppGpp from GTP: step 2/2. Catalyzes the conversion of pppGpp to ppGpp. Guanosine pentaphosphate (pppGpp) is a cytoplasmic signaling molecule which together with ppGpp controls the 'stringent response', an adaptive process that allows bacteria to respond to amino acid starvation, resulting in the coordinated regulation of numerous cellular activities. The polypeptide is Guanosine-5'-triphosphate,3'-diphosphate pyrophosphatase (Salmonella gallinarum (strain 287/91 / NCTC 13346)).